We begin with the raw amino-acid sequence, 337 residues long: Inositol 2-dehydrogenase (337 aa).

The protein belongs to the Gfo/Idh/MocA family. In terms of assembly, homotetramer.

The enzyme catalyses myo-inositol + NAD(+) = scyllo-inosose + NADH + H(+). Functionally, involved in the oxidation of myo-inositol (MI) to 2-keto-myo-inositol (2KMI or 2-inosose). This chain is Inositol 2-dehydrogenase, found in Corynebacterium glutamicum (strain R).